A 443-amino-acid chain; its full sequence is MAASPHTLSSRLLTGCVGGCVWYLERRTIQDSPHKFLHLLRNVNKQWITFQHFNFLKRMYVTQLNRSHNQQVRPKPEPVASPFLEKTSSGQAKAEIYEMRPLSPPSLSLSRKPNEKELIELEPASVIEDSIDVGKERKEEKRWKEMKLQVYDLPGILARLSKIKLTALVVSTTAAGFALAPGPFDWPCFLLTSVGTGLASCAANSINQFFEVPFDSNMNRTKNRPLVRGQISPLLAVSFATCCAVPGVAILTLGVNPLTGALGLFNIFLYTCCYTPLKRISIANTWVGAVVGAIPPVMGWTAATGSLDAGAFLLGGILYSWQFPHFNALSWGLREGYSRGGYCMMSVTHPGLCRRVALRHCLALLVLSAAAPVLDITTWTFPIMALPINAYISYLGFRFYVDADRRSSRRLFFCSLWHLPLLLLLMLTCKRPRGGGDAGPPPS.

The next 7 helical transmembrane spans lie at 174–194, 235–255, 257–277, 280–300, 309–329, 364–384, and 411–431; these read AAGF…LTSV, LAVS…TLGV, PLTG…YTPL, ISIA…VMGW, AGAF…FNAL, LLVL…FPIM, and LFFC…TCKR.

It belongs to the UbiA prenyltransferase family.

Its subcellular location is the mitochondrion membrane. The enzyme catalyses heme b + (2E,6E)-farnesyl diphosphate + H2O = Fe(II)-heme o + diphosphate. Its function is as follows. Converts protoheme IX and farnesyl diphosphate to heme O. The protein is Protoheme IX farnesyltransferase, mitochondrial (COX10) of Pongo abelii (Sumatran orangutan).